The primary structure comprises 400 residues: Queuine tRNA-ribosyltransferase (400 aa).

The Proton acceptor role is filled by D93. Substrate is bound by residues D93–F97, D166, and G247. The tract at residues G277–D283 is RNA binding. D296 serves as the catalytic Nucleophile. The RNA binding; important for wobble base 34 recognition stretch occupies residues T301–R305. Zn(2+) is bound by residues C338, C340, C343, and H369.

It belongs to the queuine tRNA-ribosyltransferase family. In terms of assembly, homodimer. Within each dimer, one monomer is responsible for RNA recognition and catalysis, while the other monomer binds to the replacement base PreQ1. The cofactor is Zn(2+).

It carries out the reaction 7-aminomethyl-7-carbaguanine + guanosine(34) in tRNA = 7-aminomethyl-7-carbaguanosine(34) in tRNA + guanine. It functions in the pathway tRNA modification; tRNA-queuosine biosynthesis. In terms of biological role, catalyzes the base-exchange of a guanine (G) residue with the queuine precursor 7-aminomethyl-7-deazaguanine (PreQ1) at position 34 (anticodon wobble position) in tRNAs with GU(N) anticodons (tRNA-Asp, -Asn, -His and -Tyr). Catalysis occurs through a double-displacement mechanism. The nucleophile active site attacks the C1' of nucleotide 34 to detach the guanine base from the RNA, forming a covalent enzyme-RNA intermediate. The proton acceptor active site deprotonates the incoming PreQ1, allowing a nucleophilic attack on the C1' of the ribose to form the product. After dissociation, two additional enzymatic reactions on the tRNA convert PreQ1 to queuine (Q), resulting in the hypermodified nucleoside queuosine (7-(((4,5-cis-dihydroxy-2-cyclopenten-1-yl)amino)methyl)-7-deazaguanosine). The protein is Queuine tRNA-ribosyltransferase of Roseiflexus sp. (strain RS-1).